Reading from the N-terminus, the 275-residue chain is Digeranylgeranylglyceryl phosphate synthase (275 aa).

8 helical membrane-spanning segments follow: residues 12 to 32, 35 to 55, 88 to 108, 125 to 145, 146 to 166, 200 to 220, 224 to 244, and 255 to 275; these read VHNV…ATTW, TPLF…GYVI, IVLF…PFGF, KLGL…AYYG, GLAS…IFFF, WIIA…PYFL, VIYL…LILH, and SLMK…SLRI.

Belongs to the UbiA prenyltransferase family. DGGGP synthase subfamily. It depends on Mg(2+) as a cofactor.

The protein localises to the cell membrane. It carries out the reaction sn-3-O-(geranylgeranyl)glycerol 1-phosphate + (2E,6E,10E)-geranylgeranyl diphosphate = 2,3-bis-O-(geranylgeranyl)-sn-glycerol 1-phosphate + diphosphate. It participates in membrane lipid metabolism; glycerophospholipid metabolism. Prenyltransferase that catalyzes the transfer of the geranylgeranyl moiety of geranylgeranyl diphosphate (GGPP) to the C2 hydroxyl of (S)-3-O-geranylgeranylglyceryl phosphate (GGGP). This reaction is the second ether-bond-formation step in the biosynthesis of archaeal membrane lipids. The polypeptide is Digeranylgeranylglyceryl phosphate synthase (Sulfolobus acidocaldarius (strain ATCC 33909 / DSM 639 / JCM 8929 / NBRC 15157 / NCIMB 11770)).